The primary structure comprises 98 residues: DNA-binding protein Fis (98 aa).

The H-T-H motif DNA-binding region spans 74 to 93 (QTKAANMMGINRGTLRKKLK).

The protein belongs to the transcriptional regulatory Fis family. In terms of assembly, homodimer.

Functionally, activates ribosomal RNA transcription. Plays a direct role in upstream activation of rRNA promoters. The chain is DNA-binding protein Fis from Aliivibrio fischeri (strain ATCC 700601 / ES114) (Vibrio fischeri).